Reading from the N-terminus, the 592-residue chain is E3 ubiquitin-protein ligase RNF180 (592 aa).

At 1 to 564 (MKRSEESTST…DSRGWWFDMD (564 aa)) the chain is on the cytoplasmic side. Ser231 carries the post-translational modification Phosphoserine. An interaction with ZIC2 region spans residues 282–489 (QSPPSFDPNM…VFLQTELNNA (208 aa)). An RING-type zinc finger spans residues 432-474 (CAVCLDVYFNPYMCYPCHHIFCEPCLRTLAKDNPASTPCPLCR). A helical membrane pass occupies residues 565–585 (MVIIYIYSVNWVIGFVVFCFL). The Extracellular portion of the chain corresponds to 586-592 (CYFFFPF).

In terms of assembly, interacts with ZIC2. In terms of tissue distribution, brain, kidney, testis and uterus. membrane protein. Nucleus envelope.

The protein localises to the endoplasmic reticulum membrane. It localises to the nucleus envelope. The enzyme catalyses S-ubiquitinyl-[E2 ubiquitin-conjugating enzyme]-L-cysteine + [acceptor protein]-L-lysine = [E2 ubiquitin-conjugating enzyme]-L-cysteine + N(6)-ubiquitinyl-[acceptor protein]-L-lysine.. Its pathway is protein modification; protein ubiquitination. In terms of biological role, E3 ubiquitin-protein ligase which promotes polyubiquitination and degradation by the proteasome pathway of ZIC2. The protein is E3 ubiquitin-protein ligase RNF180 (Rnf180) of Mus musculus (Mouse).